The primary structure comprises 59 residues: Large ribosomal subunit protein uL30 (59 aa).

This sequence belongs to the universal ribosomal protein uL30 family. As to quaternary structure, part of the 50S ribosomal subunit.

This chain is Large ribosomal subunit protein uL30, found in Aeromonas hydrophila subsp. hydrophila (strain ATCC 7966 / DSM 30187 / BCRC 13018 / CCUG 14551 / JCM 1027 / KCTC 2358 / NCIMB 9240 / NCTC 8049).